A 387-amino-acid polypeptide reads, in one-letter code: Probable 1-alkyl-2-acetylglycerophosphocholine esterase (387 aa).

The N-terminal stretch at 1–17 is a signal peptide; the sequence is MLVQGTIICALVANAIA. N-linked (GlcNAc...) asparagine glycans are attached at residues asparagine 51 and asparagine 141. Residue serine 227 is the Nucleophile of the active site. Aspartate 250 functions as the Charge relay system in the catalytic mechanism. Asparagine 283 is a glycosylation site (N-linked (GlcNAc...) asparagine). Histidine 313 functions as the Charge relay system in the catalytic mechanism.

The protein belongs to the AB hydrolase superfamily. Lipase family.

The protein resides in the secreted. The enzyme catalyses a 1-O-alkyl-2-acetyl-sn-glycero-3-phosphocholine + H2O = a 1-O-alkyl-sn-glycero-3-phosphocholine + acetate + H(+). This is Probable 1-alkyl-2-acetylglycerophosphocholine esterase from Arthroderma benhamiae (strain ATCC MYA-4681 / CBS 112371) (Trichophyton mentagrophytes).